Here is a 249-residue protein sequence, read N- to C-terminus: Vitamin B12 import ATP-binding protein BtuD (249 aa).

In terms of domain architecture, ABC transporter spans 1–233 (MSIVMQLQDV…PNLAQAYGMN (233 aa)). Position 33 to 40 (33 to 40 (GPNGAGKS)) interacts with ATP.

This sequence belongs to the ABC transporter superfamily. Vitamin B12 importer (TC 3.A.1.13.1) family. In terms of assembly, the complex is composed of two ATP-binding proteins (BtuD), two transmembrane proteins (BtuC) and a solute-binding protein (BtuF).

The protein resides in the cell inner membrane. The enzyme catalyses an R-cob(III)alamin(out) + ATP + H2O = an R-cob(III)alamin(in) + ADP + phosphate + H(+). Part of the ABC transporter complex BtuCDF involved in vitamin B12 import. Responsible for energy coupling to the transport system. This is Vitamin B12 import ATP-binding protein BtuD from Escherichia coli (strain K12 / DH10B).